The chain runs to 271 residues: Chymotrypsin BII (271 aa).

The first 15 residues, 1-15 (MIGKLSLLLVCVAVA), serve as a signal peptide directing secretion. Positions 16–45 (SGNPAAGKPWHWKSPKPLVDPRIHVNATPR) are cleaved as a propeptide — activation peptide. Positions 46–268 (IVGGVEATPH…YLDWIEQKTG (223 aa)) constitute a Peptidase S1 domain. Cys-71 and Cys-87 are oxidised to a cystine. Catalysis depends on charge relay system residues His-86 and Asp-132. Intrachain disulfides connect Cys-196/Cys-209 and Cys-219/Cys-245. Ser-223 serves as the catalytic Charge relay system.

This sequence belongs to the peptidase S1 family.

The protein localises to the secreted. It is found in the extracellular space. The catalysed reaction is Preferential cleavage: Tyr-|-Xaa, Trp-|-Xaa, Phe-|-Xaa, Leu-|-Xaa.. Serine protease with chymotryptic and collagenolytic activities. The protein is Chymotrypsin BII of Penaeus vannamei (Whiteleg shrimp).